Consider the following 175-residue polypeptide: ATP-dependent protease subunit HslV (175 aa).

T2 is an active-site residue. G158, C161, and T164 together coordinate Na(+).

This sequence belongs to the peptidase T1B family. HslV subfamily. In terms of assembly, a double ring-shaped homohexamer of HslV is capped on each side by a ring-shaped HslU homohexamer. The assembly of the HslU/HslV complex is dependent on binding of ATP.

The protein localises to the cytoplasm. It carries out the reaction ATP-dependent cleavage of peptide bonds with broad specificity.. With respect to regulation, allosterically activated by HslU binding. Protease subunit of a proteasome-like degradation complex believed to be a general protein degrading machinery. In Haemophilus influenzae (strain PittEE), this protein is ATP-dependent protease subunit HslV.